The sequence spans 186 residues: ADP-ribosylation factor-like protein 6 (186 aa).

Glycine 2 carries the N-myristoyl glycine lipid modification. Residues 24–31 (GLDNSGKT), threonine 50, 69–73 (DMSGQ), glycine 72, 130–133 (NKMD), and alanine 164 contribute to the GTP site. Mg(2+)-binding residues include threonine 31 and threonine 50.

The protein belongs to the small GTPase superfamily. Arf family. As to quaternary structure, interacts with SEC61B, ARL6IP1, ARL6IP2, ARL6IP3, ARL6IP4 ARL6IP5 and ARL6IP6. Interacts (GTP-bound form) with the BBSome a complex that contains BBS1, BBS2, BBS4, BBS5, BBS7, BBS8/TTC8, BBS9 and BBIP10. Interacts (GTP-free form) with IFT27.

The protein resides in the cell projection. It is found in the cilium membrane. It localises to the cytoplasm. Its subcellular location is the cytoskeleton. The protein localises to the cilium axoneme. The protein resides in the cilium basal body. Functionally, involved in membrane protein trafficking at the base of the ciliary organelle. Mediates recruitment onto plasma membrane of the BBSome complex which would constitute a coat complex required for sorting of specific membrane proteins to the primary cilia. Together with BBS1, is necessary for correct trafficking of PKD1 to primary cilia. Together with the BBSome complex and LTZL1, controls SMO ciliary trafficking and contributes to the sonic hedgehog (SHH) pathway regulation. May regulate cilia assembly and disassembly and subsequent ciliary signaling events such as the Wnt signaling cascade. Isoform 2 may be required for proper retinal function and organization. This chain is ADP-ribosylation factor-like protein 6 (ARL6), found in Homo sapiens (Human).